A 158-amino-acid chain; its full sequence is NAD(P)H-quinone oxidoreductase subunit J, chloroplastic (158 aa).

Belongs to the complex I 30 kDa subunit family. As to quaternary structure, NDH is composed of at least 16 different subunits, 5 of which are encoded in the nucleus.

The protein resides in the plastid. It localises to the chloroplast thylakoid membrane. It carries out the reaction a plastoquinone + NADH + (n+1) H(+)(in) = a plastoquinol + NAD(+) + n H(+)(out). The catalysed reaction is a plastoquinone + NADPH + (n+1) H(+)(in) = a plastoquinol + NADP(+) + n H(+)(out). NDH shuttles electrons from NAD(P)H:plastoquinone, via FMN and iron-sulfur (Fe-S) centers, to quinones in the photosynthetic chain and possibly in a chloroplast respiratory chain. The immediate electron acceptor for the enzyme in this species is believed to be plastoquinone. Couples the redox reaction to proton translocation, and thus conserves the redox energy in a proton gradient. The sequence is that of NAD(P)H-quinone oxidoreductase subunit J, chloroplastic from Piper cenocladum (Ant piper).